Here is a 37-residue protein sequence, read N- to C-terminus: Large ribosomal subunit protein bL36c (37 aa).

The protein belongs to the bacterial ribosomal protein bL36 family.

It is found in the plastid. Its subcellular location is the chloroplast. The polypeptide is Large ribosomal subunit protein bL36c (Bigelowiella natans (Pedinomonas minutissima)).